The chain runs to 209 residues: Uracil phosphoribosyltransferase (209 aa).

Residues R79, R104, and 131–139 each bind 5-phospho-alpha-D-ribose 1-diphosphate; that span reads DPMLATGGS. Residues I194 and 199–201 contribute to the uracil site; that span reads GDA. 5-phospho-alpha-D-ribose 1-diphosphate is bound at residue D200.

This sequence belongs to the UPRTase family. Requires Mg(2+) as cofactor.

The enzyme catalyses UMP + diphosphate = 5-phospho-alpha-D-ribose 1-diphosphate + uracil. The protein operates within pyrimidine metabolism; UMP biosynthesis via salvage pathway; UMP from uracil: step 1/1. Allosterically activated by GTP. In terms of biological role, catalyzes the conversion of uracil and 5-phospho-alpha-D-ribose 1-diphosphate (PRPP) to UMP and diphosphate. This is Uracil phosphoribosyltransferase from Geobacter sulfurreducens (strain ATCC 51573 / DSM 12127 / PCA).